Consider the following 719-residue polypeptide: DNA ligase (719 aa).

NAD(+)-binding positions include 42–46 (DAAYD), 92–93 (SL), and Glu-126. The active-site N6-AMP-lysine intermediate is Lys-128. NAD(+)-binding residues include Arg-149, Glu-185, Lys-301, and Lys-325. Cys-430, Cys-433, Cys-448, and Cys-454 together coordinate Zn(2+). A BRCT domain is found at 640 to 719 (ATGSPVEGKT…DDWFKLVGED (80 aa)).

This sequence belongs to the NAD-dependent DNA ligase family. LigA subfamily. Requires Mg(2+) as cofactor. Mn(2+) is required as a cofactor.

It catalyses the reaction NAD(+) + (deoxyribonucleotide)n-3'-hydroxyl + 5'-phospho-(deoxyribonucleotide)m = (deoxyribonucleotide)n+m + AMP + beta-nicotinamide D-nucleotide.. DNA ligase that catalyzes the formation of phosphodiester linkages between 5'-phosphoryl and 3'-hydroxyl groups in double-stranded DNA using NAD as a coenzyme and as the energy source for the reaction. It is essential for DNA replication and repair of damaged DNA. In Brucella melitensis biotype 1 (strain ATCC 23456 / CCUG 17765 / NCTC 10094 / 16M), this protein is DNA ligase.